The chain runs to 382 residues: Homoserine O-acetyltransferase (382 aa).

Residues 1–20 (MSTDQSPCPSATGAELLPPP) are disordered. The AB hydrolase-1 domain maps to 59 to 363 (NVVLVEHALT…RDGHDGFLTE (305 aa)). The active-site Nucleophile is the Ser164. Arg234 is a binding site for substrate. Active-site residues include Asp327 and His357. Asp358 lines the substrate pocket.

It belongs to the AB hydrolase superfamily. MetX family. In terms of assembly, homodimer.

It is found in the cytoplasm. The catalysed reaction is L-homoserine + acetyl-CoA = O-acetyl-L-homoserine + CoA. It participates in amino-acid biosynthesis; L-methionine biosynthesis via de novo pathway; O-acetyl-L-homoserine from L-homoserine: step 1/1. Transfers an acetyl group from acetyl-CoA to L-homoserine, forming acetyl-L-homoserine. The protein is Homoserine O-acetyltransferase of Nocardia farcinica (strain IFM 10152).